Here is a 158-residue protein sequence, read N- to C-terminus: NAD(P)H-quinone oxidoreductase subunit N (158 aa).

This sequence belongs to the complex I NdhN subunit family. As to quaternary structure, NDH-1 can be composed of about 15 different subunits; different subcomplexes with different compositions have been identified which probably have different functions.

The protein resides in the cellular thylakoid membrane. The catalysed reaction is a plastoquinone + NADH + (n+1) H(+)(in) = a plastoquinol + NAD(+) + n H(+)(out). It carries out the reaction a plastoquinone + NADPH + (n+1) H(+)(in) = a plastoquinol + NADP(+) + n H(+)(out). NDH-1 shuttles electrons from an unknown electron donor, via FMN and iron-sulfur (Fe-S) centers, to quinones in the respiratory and/or the photosynthetic chain. The immediate electron acceptor for the enzyme in this species is believed to be plastoquinone. Couples the redox reaction to proton translocation, and thus conserves the redox energy in a proton gradient. Cyanobacterial NDH-1 also plays a role in inorganic carbon-concentration. This chain is NAD(P)H-quinone oxidoreductase subunit N, found in Trichodesmium erythraeum (strain IMS101).